A 364-amino-acid chain; its full sequence is Putative F-box/kelch-repeat protein At1g12170 (364 aa).

Residues 1–50 (MMHVILPWELVEEILYRVPPLSLTRFKIVCKQWNTLFKSKSFVNNHLVRV) enclose the F-box domain. Kelch repeat units lie at residues 156–205 (SIYN…LNGN) and 328–364 (CVYI…IPVP).

The protein is Putative F-box/kelch-repeat protein At1g12170 of Arabidopsis thaliana (Mouse-ear cress).